The primary structure comprises 732 residues: Engulfment and cell motility protein 2 (732 aa).

Phosphotyrosine is present on Tyr-48. An ELMO domain is found at Ala-323–Leu-497. Ser-515 carries the phosphoserine modification. In terms of domain architecture, PH spans Ser-565–Leu-686. Residues Pro-712 to Pro-719 carry the SH3-binding motif. Residue Tyr-729 is modified to Phosphotyrosine.

Interacts directly with the SH3-domain of DOCK1 via its SH3-binding site. Probably forms a heterotrimeric complex with DOCK1 and RAC1. Interacts with ARHGEF16, DOCK4 and EPHA2; mediates activation of RAC1 by EPHA2. Interacts with ADGRB3. Interacts with AUTS2; the interaction is direct.

It localises to the cytoplasm. The protein localises to the cytosol. It is found in the membrane. Involved in cytoskeletal rearrangements required for phagocytosis of apoptotic cells and cell motility. Acts in association with DOCK1 and CRK. Was initially proposed to be required in complex with DOCK1 to activate Rac Rho small GTPases. May enhance the guanine nucleotide exchange factor (GEF) activity of DOCK1. This is Engulfment and cell motility protein 2 (Elmo2) from Mus musculus (Mouse).